Reading from the N-terminus, the 262-residue chain is Global transcriptional regulator CodY (262 aa).

The interval 1 to 159 is GAF domain; the sequence is MATLLEKTRK…ATTVIGVQLS (159 aa). Positions 207-226 form a DNA-binding region, H-T-H motif; the sequence is ASVIADKIGITRSVIVNALR.

The protein belongs to the CodY family.

The protein resides in the cytoplasm. Functionally, DNA-binding global transcriptional regulator which is involved in the adaptive response to starvation and acts by directly or indirectly controlling the expression of numerous genes in response to nutrient availability. During rapid exponential growth, CodY is highly active and represses genes whose products allow adaptation to nutrient depletion. In Lactococcus lactis subsp. cremoris (strain SK11), this protein is Global transcriptional regulator CodY.